Reading from the N-terminus, the 563-residue chain is Septation ring formation regulator EzrA (563 aa).

At Met-1–Glu-2 the chain is on the extracellular side. A helical transmembrane segment spans residues Leu-3–Phe-21. Over Arg-22 to Ser-563 the chain is Cytoplasmic. Coiled coils occupy residues Glu-133–His-159, Lys-243–Val-276, and Ser-309–Phe-529.

This sequence belongs to the EzrA family.

It localises to the cell membrane. Its function is as follows. Negative regulator of FtsZ ring formation; modulates the frequency and position of FtsZ ring formation. Inhibits FtsZ ring formation at polar sites. Interacts either with FtsZ or with one of its binding partners to promote depolymerization. In Bacillus velezensis (strain DSM 23117 / BGSC 10A6 / LMG 26770 / FZB42) (Bacillus amyloliquefaciens subsp. plantarum), this protein is Septation ring formation regulator EzrA.